Here is a 250-residue protein sequence, read N- to C-terminus: Putative HTH-type transcriptional regulatory protein PAE1627 (250 aa).

The 55-residue stretch at 129–183 folds into the HTH cro/C1-type domain; that stretch reads LRAKRQQAGLSLGTLATNLGVTRETVYRYERGEIEAPLKIAEKLINMFGEDITKK. The H-T-H motif DNA-binding region spans 140–159; that stretch reads LGTLATNLGVTRETVYRYER.

This chain is Putative HTH-type transcriptional regulatory protein PAE1627, found in Pyrobaculum aerophilum (strain ATCC 51768 / DSM 7523 / JCM 9630 / CIP 104966 / NBRC 100827 / IM2).